The primary structure comprises 139 residues: uncharacterized protein (139 aa).

The disordered stretch occupies residues 54 to 75 (NSLHRHGDQAWGKHRRQNSLKS).

This is an uncharacterized protein from Homo sapiens (Human).